Reading from the N-terminus, the 132-residue chain is Phosphoribosyl-AMP cyclohydrolase (132 aa).

Position 81 (D81) interacts with Mg(2+). C82 is a Zn(2+) binding site. D83 and D85 together coordinate Mg(2+). Residues C99 and C106 each contribute to the Zn(2+) site.

It belongs to the PRA-CH family. Homodimer. The cofactor is Mg(2+). Zn(2+) is required as a cofactor.

It is found in the cytoplasm. The catalysed reaction is 1-(5-phospho-beta-D-ribosyl)-5'-AMP + H2O = 1-(5-phospho-beta-D-ribosyl)-5-[(5-phospho-beta-D-ribosylamino)methylideneamino]imidazole-4-carboxamide. The protein operates within amino-acid biosynthesis; L-histidine biosynthesis; L-histidine from 5-phospho-alpha-D-ribose 1-diphosphate: step 3/9. Catalyzes the hydrolysis of the adenine ring of phosphoribosyl-AMP. The chain is Phosphoribosyl-AMP cyclohydrolase from Chromobacterium violaceum (strain ATCC 12472 / DSM 30191 / JCM 1249 / CCUG 213 / NBRC 12614 / NCIMB 9131 / NCTC 9757 / MK).